The primary structure comprises 334 residues: TPR repeat-containing protein MJ0798 (334 aa).

TPR repeat units follow at residues tryptophan 102–threonine 135, leucine 137–asparagine 168, tyrosine 169–aspartate 202, glutamate 204–aspartate 235, isoleucine 236–valine 269, glutamate 273–histidine 306, and glutamate 308–leucine 333.

The protein is TPR repeat-containing protein MJ0798 of Methanocaldococcus jannaschii (strain ATCC 43067 / DSM 2661 / JAL-1 / JCM 10045 / NBRC 100440) (Methanococcus jannaschii).